The following is a 505-amino-acid chain: Glycerol kinase (505 aa).

Residue Thr-15 participates in ADP binding. 3 residues coordinate ATP: Thr-15, Thr-16, and Ser-17. Thr-15 is a binding site for sn-glycerol 3-phosphate. Arg-19 serves as a coordination point for ADP. 4 residues coordinate sn-glycerol 3-phosphate: Arg-85, Glu-86, Tyr-136, and Asp-249. Glycerol-binding residues include Arg-85, Glu-86, Tyr-136, Asp-249, and Gln-250. ADP contacts are provided by Thr-271 and Gly-314. ATP contacts are provided by Thr-271, Gly-314, Gln-318, and Gly-415. Residues Gly-415 and Asn-419 each contribute to the ADP site.

This sequence belongs to the FGGY kinase family.

The enzyme catalyses glycerol + ATP = sn-glycerol 3-phosphate + ADP + H(+). Its pathway is polyol metabolism; glycerol degradation via glycerol kinase pathway; sn-glycerol 3-phosphate from glycerol: step 1/1. Its activity is regulated as follows. Inhibited by fructose 1,6-bisphosphate (FBP). Its function is as follows. Key enzyme in the regulation of glycerol uptake and metabolism. Catalyzes the phosphorylation of glycerol to yield sn-glycerol 3-phosphate. The sequence is that of Glycerol kinase from Mycoplasma mycoides subsp. mycoides SC (strain CCUG 32753 / NCTC 10114 / PG1).